A 37-amino-acid chain; its full sequence is Photosystem II reaction center protein M (37 aa).

Residues 7-27 (AFIAVLLFLAVPTAFLLIPYV) traverse the membrane as a helical segment.

It belongs to the PsbM family. As to quaternary structure, PSII is composed of 1 copy each of membrane proteins PsbA, PsbB, PsbC, PsbD, PsbE, PsbF, PsbH, PsbI, PsbJ, PsbK, PsbL, PsbM, PsbT, PsbX, PsbY, PsbZ, Psb30/Ycf12, at least 3 peripheral proteins of the oxygen-evolving complex and a large number of cofactors. It forms dimeric complexes.

The protein localises to the plastid. It is found in the chloroplast thylakoid membrane. One of the components of the core complex of photosystem II (PSII). PSII is a light-driven water:plastoquinone oxidoreductase that uses light energy to abstract electrons from H(2)O, generating O(2) and a proton gradient subsequently used for ATP formation. It consists of a core antenna complex that captures photons, and an electron transfer chain that converts photonic excitation into a charge separation. This subunit is found at the monomer-monomer interface. The polypeptide is Photosystem II reaction center protein M (Pinus thunbergii (Japanese black pine)).